A 172-amino-acid polypeptide reads, in one-letter code: PRELI domain containing protein 3A (172 aa).

The 172-residue stretch at 1-172 (MKIWSSEHVF…IIEHSESAVS (172 aa)) folds into the PRELI/MSF1 domain.

The protein belongs to the slowmo family. As to quaternary structure, interacts with TRIAP1.

It is found in the mitochondrion. In terms of biological role, in vitro, the TRIAP1:PRELID3A complex mediates the transfer of phosphatidic acid (PA) between liposomes and probably functions as a PA transporter across the mitochondrion intermembrane space. Phosphatidic acid import is required for cardiolipin (CL) synthesis in the mitochondrial inner membrane. This chain is PRELI domain containing protein 3A (PRELID3A), found in Homo sapiens (Human).